We begin with the raw amino-acid sequence, 475 residues long: Pup--protein ligase (475 aa).

A Mg(2+)-binding site is contributed by E19. An ATP-binding site is contributed by R64. A Mg(2+)-binding site is contributed by Y66. D68 (proton acceptor) is an active-site residue. Position 74 (E74) interacts with Mg(2+). ATP-binding residues include T77 and W436.

The protein belongs to the Pup ligase/Pup deamidase family. Pup-conjugating enzyme subfamily.

The catalysed reaction is ATP + [prokaryotic ubiquitin-like protein]-L-glutamate + [protein]-L-lysine = ADP + phosphate + N(6)-([prokaryotic ubiquitin-like protein]-gamma-L-glutamyl)-[protein]-L-lysine.. Its pathway is protein degradation; proteasomal Pup-dependent pathway. It participates in protein modification; protein pupylation. Catalyzes the covalent attachment of the prokaryotic ubiquitin-like protein modifier Pup to the proteasomal substrate proteins, thereby targeting them for proteasomal degradation. This tagging system is termed pupylation. The ligation reaction involves the side-chain carboxylate of the C-terminal glutamate of Pup and the side-chain amino group of a substrate lysine. The protein is Pup--protein ligase of Corynebacterium aurimucosum (strain ATCC 700975 / DSM 44827 / CIP 107346 / CN-1) (Corynebacterium nigricans).